The primary structure comprises 168 residues: Gremlin-2 (168 aa).

The signal sequence occupies residues 1 to 21 (MFWKLSLSLFLVAVLVKVAEA). N-linked (GlcNAc...) asparagine glycosylation is present at Asn40. 4 disulfides stabilise this stretch: Cys73–Cys123, Cys87–Cys137, Cys97–Cys155, and Cys101–Cys157. The CTCK domain maps to 73–163 (CKTQPLRQTV…QCRCMSVNLS (91 aa)). Asn161 carries N-linked (GlcNAc...) asparagine glycosylation.

This sequence belongs to the DAN family. Homodimer. Interacts with BMP2, BMP4 and BMP7, but has lower affinity for BMP7 than for BMP2 and BMP4. Binds heparin; this impairs the interaction with BMP2. N-glycosylated.

The protein resides in the secreted. Its function is as follows. Cytokine that inhibits the activity of BMP2 and BMP4 in a dose-dependent manner, and thereby modulates signaling by BMP family members. Contributes to the regulation of embryonic morphogenesis via BMP family members. Antagonizes BMP4-induced suppression of progesterone production in granulosa cells. The sequence is that of Gremlin-2 (GREM2) from Homo sapiens (Human).